Reading from the N-terminus, the 116-residue chain is Large ribosomal subunit protein bL19 (116 aa).

The protein belongs to the bacterial ribosomal protein bL19 family.

This protein is located at the 30S-50S ribosomal subunit interface and may play a role in the structure and function of the aminoacyl-tRNA binding site. In Blochmanniella pennsylvanica (strain BPEN), this protein is Large ribosomal subunit protein bL19.